We begin with the raw amino-acid sequence, 335 residues long: Tetraacyldisaccharide 4'-kinase (335 aa).

59-66 (TAGGNGKT) is an ATP binding site.

The protein belongs to the LpxK family.

It carries out the reaction a lipid A disaccharide + ATP = a lipid IVA + ADP + H(+). It participates in glycolipid biosynthesis; lipid IV(A) biosynthesis; lipid IV(A) from (3R)-3-hydroxytetradecanoyl-[acyl-carrier-protein] and UDP-N-acetyl-alpha-D-glucosamine: step 6/6. Functionally, transfers the gamma-phosphate of ATP to the 4'-position of a tetraacyldisaccharide 1-phosphate intermediate (termed DS-1-P) to form tetraacyldisaccharide 1,4'-bis-phosphate (lipid IVA). The protein is Tetraacyldisaccharide 4'-kinase of Vibrio campbellii (strain ATCC BAA-1116).